Consider the following 289-residue polypeptide: 4-hydroxy-tetrahydrodipicolinate synthase (289 aa).

Residue Thr43 participates in pyruvate binding. Tyr131 (proton donor/acceptor) is an active-site residue. The Schiff-base intermediate with substrate role is filled by Lys160. Val200 is a pyruvate binding site.

This sequence belongs to the DapA family. Homotetramer; dimer of dimers.

The protein resides in the cytoplasm. The catalysed reaction is L-aspartate 4-semialdehyde + pyruvate = (2S,4S)-4-hydroxy-2,3,4,5-tetrahydrodipicolinate + H2O + H(+). It participates in amino-acid biosynthesis; L-lysine biosynthesis via DAP pathway; (S)-tetrahydrodipicolinate from L-aspartate: step 3/4. In terms of biological role, catalyzes the condensation of (S)-aspartate-beta-semialdehyde [(S)-ASA] and pyruvate to 4-hydroxy-tetrahydrodipicolinate (HTPA). The chain is 4-hydroxy-tetrahydrodipicolinate synthase from Methanococcus maripaludis (strain DSM 14266 / JCM 13030 / NBRC 101832 / S2 / LL).